Here is a 398-residue protein sequence, read N- to C-terminus: 1-deoxy-D-xylulose 5-phosphate reductoisomerase (398 aa).

NADPH contacts are provided by Thr-10, Gly-11, Ser-12, Ile-13, Lys-37, Asn-38, and Asn-124. Lys-125 is a binding site for 1-deoxy-D-xylulose 5-phosphate. Glu-126 contacts NADPH. A Mn(2+)-binding site is contributed by Asp-150. Residues Ser-151, Glu-152, Ser-186, and His-209 each coordinate 1-deoxy-D-xylulose 5-phosphate. Mn(2+) is bound at residue Glu-152. Gly-215 contacts NADPH. 1-deoxy-D-xylulose 5-phosphate-binding residues include Ser-222, Asn-227, Lys-228, and Glu-231. Glu-231 contributes to the Mn(2+) binding site.

Belongs to the DXR family. Homodimer. Mg(2+) serves as cofactor. The cofactor is Mn(2+).

It catalyses the reaction 2-C-methyl-D-erythritol 4-phosphate + NADP(+) = 1-deoxy-D-xylulose 5-phosphate + NADPH + H(+). It functions in the pathway isoprenoid biosynthesis; isopentenyl diphosphate biosynthesis via DXP pathway; isopentenyl diphosphate from 1-deoxy-D-xylulose 5-phosphate: step 1/6. Catalyzes the NADPH-dependent rearrangement and reduction of 1-deoxy-D-xylulose-5-phosphate (DXP) to 2-C-methyl-D-erythritol 4-phosphate (MEP). The sequence is that of 1-deoxy-D-xylulose 5-phosphate reductoisomerase from Buchnera aphidicola subsp. Schizaphis graminum (strain Sg).